The chain runs to 338 residues: NADPH dehydrogenase (338 aa).

23 to 26 (SPMC) is a binding site for FMN. Tyr28 contacts substrate. Residues Ala60 and Gln102 each coordinate FMN. 164 to 167 (HGAH) is a substrate binding site. Residues Arg215 and 307 to 308 (GR) each bind FMN.

The protein belongs to the NADH:flavin oxidoreductase/NADH oxidase family. NamA subfamily. In terms of assembly, homotetramer. It depends on FMN as a cofactor.

It catalyses the reaction A + NADPH + H(+) = AH2 + NADP(+). Its function is as follows. Catalyzes the reduction of the double bond of an array of alpha,beta-unsaturated aldehydes and ketones. It also reduces the nitro group of nitroester and nitroaromatic compounds. It could have a role in detoxification processes. This chain is NADPH dehydrogenase, found in Bacillus pumilus (strain SAFR-032).